The following is a 382-amino-acid chain: Protein PEP-RELATED DEVELOPMENT ARRESTED 1 homolog, chloroplastic (382 aa).

A chloroplast-targeting transit peptide spans 1-44; the sequence is MAILPLSISHSLTSALSATSSGIGRPVARLLHPRVPSRPTVICL.

The protein resides in the plastid. It is found in the chloroplast stroma. The protein localises to the chloroplast nucleoid. Its function is as follows. Plays an essential role in early steps of chloroplast development. May be involved in the redox control of plastid gene expression by maintening the redox state around chloroplast nucleoids. May positively regulate plastid-encoded RNA polymerase (PEP) activity. The polypeptide is Protein PEP-RELATED DEVELOPMENT ARRESTED 1 homolog, chloroplastic (Oryza sativa subsp. japonica (Rice)).